Here is a 509-residue protein sequence, read N- to C-terminus: Solute carrier family 2, facilitated glucose transporter member 4 (509 aa).

Residues 1 to 23 (MPSGFQQIGSDDGEPPRQRVTGT) lie on the Cytoplasmic side of the membrane. An interaction with SRFBP1 region spans residues 7–13 (QIGSDDG). Serine 10 carries the phosphoserine modification. A helical membrane pass occupies residues 24–44 (LVLAVFSAVLGSLQFGYNIGV). Over 45–80 (INAPQKVIEQSYNATWLGRQGPGGPDSIPQGTLTTL) the chain is Extracellular. N-linked (GlcNAc...) asparagine glycosylation is present at asparagine 57. A helical transmembrane segment spans residues 81 to 101 (WALSVAIFSVGGMISSFLIGI). The Cytoplasmic portion of the chain corresponds to 102–110 (ISQWLGRKR). The helical transmembrane segment at 111-131 (AMLANNVLAVLGGALMGLANA) threads the bilayer. Residues 132-141 (AASYEILILG) are Extracellular-facing. The chain crosses the membrane as a helical span at residues 142–162 (RFLIGAYSGLTSGLVPMYVGE). The Cytoplasmic portion of the chain corresponds to 163-170 (IAPTHLRG). Residues 171–191 (ALGTLNQLAIVIGILVAQVLG) form a helical membrane-spanning segment. Glutamine 177 contributes to the D-glucose binding site. The Extracellular portion of the chain corresponds to 192–200 (LESMLGTAT). Residues 201 to 221 (LWPLLLALTVLPALLQLILLP) traverse the membrane as a helical segment. The Cytoplasmic portion of the chain corresponds to 222–286 (FCPESPRYLY…QLLGSRTHRQ (65 aa)). Cysteine 223 carries S-palmitoyl cysteine lipidation. Phosphoserine; by SGK1 is present on serine 274. Residues 287 to 307 (PLIIAVVLQLSQQLSGINAVF) form a helical membrane-spanning segment. D-glucose contacts are provided by residues 298-299 (QQ) and asparagine 304. Over 308-322 (YYSTSIFESAGVGQP) the chain is Extracellular. A helical transmembrane segment spans residues 323–343 (AYATIGAGVVNTVFTLVSVLL). Asparagine 333 serves as a coordination point for D-glucose. The Cytoplasmic segment spans residues 344–352 (VERAGRRTL). A helical transmembrane segment spans residues 353–373 (HLLGLAGMCGCAILMTVALLL). At 374–384 (LERVPAMSYVS) the chain is on the extracellular side. A helical transmembrane segment spans residues 385-405 (IVAIFGFVAFFEIGPGPIPWF). The D-glucose site is built by glutamate 396 and tryptophan 404. At 406–416 (IVAELFSQGPR) the chain is on the cytoplasmic side. A helical transmembrane segment spans residues 417-437 (PAAMAVAGFSNWTCNFIVGMG). At 438–444 (FQYVADA) the chain is on the extracellular side. The helical transmembrane segment at 445-465 (MGPYVFLLFAVLLLGFFIFTF) threads the bilayer. Residues 466–508 (LKVPETRGRTFDQISAAFRRTPSLLEQEVKPSTELEYLGPDEN) are Cytoplasmic-facing. At threonine 486 the chain carries Phosphothreonine. Position 488 is a phosphoserine (serine 488). Residues 489 to 490 (LL) carry the Dileucine internalization motif motif.

It belongs to the major facilitator superfamily. Sugar transporter (TC 2.A.1.1) family. Glucose transporter subfamily. In terms of assembly, binds to DAXX. Interacts via its N-terminus with SRFBP1. Interacts with NDUFA9. Interacts with TRARG1; the interaction is required for proper SLC2A4 recycling after insulin stimulation. Post-translationally, sumoylated. In terms of processing, palmitoylated. Palmitoylation by ZDHHC7 controls the insulin-dependent translocation of GLUT4 to the plasma membrane. As to expression, expressed in skeletal and cardiac muscles. Expressed in brown and white adipose tissues.

Its subcellular location is the cell membrane. It is found in the endomembrane system. The protein resides in the cytoplasm. It localises to the perinuclear region. It carries out the reaction D-glucose(out) = D-glucose(in). In terms of biological role, insulin-regulated facilitative glucose transporter, which plays a key role in removal of glucose from circulation. Response to insulin is regulated by its intracellular localization: in the absence of insulin, it is efficiently retained intracellularly within storage compartments in muscle and fat cells. Upon insulin stimulation, translocates from these compartments to the cell surface where it transports glucose from the extracellular milieu into the cell. The protein is Solute carrier family 2, facilitated glucose transporter member 4 of Mus musculus (Mouse).